The sequence spans 166 residues: Large ribosomal subunit protein uL10 (166 aa).

It belongs to the universal ribosomal protein uL10 family. As to quaternary structure, part of the ribosomal stalk of the 50S ribosomal subunit. The N-terminus interacts with L11 and the large rRNA to form the base of the stalk. The C-terminus forms an elongated spine to which L12 dimers bind in a sequential fashion forming a multimeric L10(L12)X complex.

In terms of biological role, forms part of the ribosomal stalk, playing a central role in the interaction of the ribosome with GTP-bound translation factors. This chain is Large ribosomal subunit protein uL10 (rplJ), found in Streptococcus pyogenes serotype M18 (strain MGAS8232).